A 253-amino-acid chain; its full sequence is Indole-3-glycerol phosphate synthase (253 aa).

It belongs to the TrpC family.

The catalysed reaction is 1-(2-carboxyphenylamino)-1-deoxy-D-ribulose 5-phosphate + H(+) = (1S,2R)-1-C-(indol-3-yl)glycerol 3-phosphate + CO2 + H2O. It functions in the pathway amino-acid biosynthesis; L-tryptophan biosynthesis; L-tryptophan from chorismate: step 4/5. The protein is Indole-3-glycerol phosphate synthase of Exiguobacterium sp. (strain ATCC BAA-1283 / AT1b).